The primary structure comprises 252 residues: Ribosomal RNA small subunit methyltransferase J (252 aa).

Residues 101–102, 117–118, 153–154, and D171 contribute to the S-adenosyl-L-methionine site; these read RD, ER, and SS.

Belongs to the methyltransferase superfamily. RsmJ family.

The protein resides in the cytoplasm. The catalysed reaction is guanosine(1516) in 16S rRNA + S-adenosyl-L-methionine = N(2)-methylguanosine(1516) in 16S rRNA + S-adenosyl-L-homocysteine + H(+). In terms of biological role, specifically methylates the guanosine in position 1516 of 16S rRNA. In Pseudoalteromonas translucida (strain TAC 125), this protein is Ribosomal RNA small subunit methyltransferase J.